The chain runs to 1706 residues: 5'-3' exoribonuclease 1 (1706 aa).

Ser-1348 carries the post-translational modification Phosphoserine. Positions 1619 to 1706 are disordered; sequence ENKEAQSSQA…VNFGVSKPSE (88 aa). The span at 1623-1642 shows a compositional bias: polar residues; it reads AQSSQATPVQTSQPDSSNIV. The residue at position 1645 (Ser-1645) is a Phosphoserine. Residues 1647-1657 show a composition bias toward low complexity; sequence RESSSASLKSS. Positions 1658 to 1676 are enriched in polar residues; that stretch reads PIAQPASSFQVETASQGHS. The span at 1677-1694 shows a compositional bias: basic residues; sequence ISHHKSTPISSSRRKSRK.

This sequence belongs to the 5'-3' exonuclease family. As to quaternary structure, found in a mRNP complex with UPF1, UPF2, UPF3B and XRN1. Associates with alpha and beta tubulins. Interacts with DIS3L2. Interacts with ZC3HAV1 in an RNA-dependent manner. Interacts with ZFP36L1. Interacts with TRIM71 (via NHL repeats) in an RNA-dependent manner. Interacts with YTHDC2 (via ANK repeats). Interacts with DHX34; the interaction is RNA-independent. As to expression, expressed in heart, brain, pancreas, spleen, testis, osteogenic sarcoma (OGS) biopsy and primary cell lines.

The protein resides in the cytoplasm. In terms of biological role, major 5'-3' exoribonuclease involved in mRNA decay. Required for the 5'-3'-processing of the G4 tetraplex-containing DNA and RNA substrates. The kinetic of hydrolysis is faster for G4 RNA tetraplex than for G4 DNA tetraplex and monomeric RNA tetraplex. Binds to RNA and DNA. Plays a role in replication-dependent histone mRNA degradation. May act as a tumor suppressor protein in osteogenic sarcoma (OGS). This Homo sapiens (Human) protein is 5'-3' exoribonuclease 1.